The following is a 485-amino-acid chain: CCA-adding enzyme (485 aa).

Ser53 and Arg56 together coordinate ATP. CTP contacts are provided by Ser53 and Arg56. Mg(2+) is bound by residues Asp65, Asp67, and Asp124. ATP-binding residues include His146, Lys164, and Tyr173. CTP is bound by residues His146, Lys164, and Tyr173.

The protein belongs to the tRNA nucleotidyltransferase/poly(A) polymerase family. Archaeal CCA-adding enzyme subfamily. As to quaternary structure, homodimer. The cofactor is Mg(2+).

The catalysed reaction is a tRNA precursor + 2 CTP + ATP = a tRNA with a 3' CCA end + 3 diphosphate. The enzyme catalyses a tRNA with a 3' CCA end + 2 CTP + ATP = a tRNA with a 3' CCACCA end + 3 diphosphate. Catalyzes the addition and repair of the essential 3'-terminal CCA sequence in tRNAs without using a nucleic acid template. Adds these three nucleotides in the order of C, C, and A to the tRNA nucleotide-73, using CTP and ATP as substrates and producing inorganic pyrophosphate. tRNA 3'-terminal CCA addition is required both for tRNA processing and repair. Also involved in tRNA surveillance by mediating tandem CCA addition to generate a CCACCA at the 3' terminus of unstable tRNAs. While stable tRNAs receive only 3'-terminal CCA, unstable tRNAs are marked with CCACCA and rapidly degraded. The polypeptide is CCA-adding enzyme (Methanopyrus kandleri (strain AV19 / DSM 6324 / JCM 9639 / NBRC 100938)).